The sequence spans 86 residues: Small ribosomal subunit protein bS20 (86 aa).

The disordered stretch occupies residues 1–25; sequence MTNIKSQQKRNRTNERARLRNKSVK.

This sequence belongs to the bacterial ribosomal protein bS20 family.

In terms of biological role, binds directly to 16S ribosomal RNA. The protein is Small ribosomal subunit protein bS20 of Mycobacterium leprae (strain Br4923).